A 700-amino-acid polypeptide reads, in one-letter code: uncharacterized protein (700 aa).

[4Fe-4S] cluster contacts are provided by C307, C310, C314, and C558.

This sequence belongs to the AOR/FOR family. Requires [4Fe-4S] cluster as cofactor. It depends on Mo-molybdopterin as a cofactor. The cofactor is tungstopterin.

This is an uncharacterized protein from Escherichia coli (strain K12).